The chain runs to 320 residues: Aspartate carbamoyltransferase catalytic subunit (320 aa).

The carbamoyl phosphate site is built by arginine 68 and threonine 69. Lysine 96 provides a ligand contact to L-aspartate. 3 residues coordinate carbamoyl phosphate: arginine 118, histidine 148, and glutamine 151. Residues arginine 181 and arginine 236 each coordinate L-aspartate. 2 residues coordinate carbamoyl phosphate: glycine 277 and proline 278.

This sequence belongs to the aspartate/ornithine carbamoyltransferase superfamily. ATCase family. In terms of assembly, heterododecamer (2C3:3R2) of six catalytic PyrB chains organized as two trimers (C3), and six regulatory PyrI chains organized as three dimers (R2).

It catalyses the reaction carbamoyl phosphate + L-aspartate = N-carbamoyl-L-aspartate + phosphate + H(+). The protein operates within pyrimidine metabolism; UMP biosynthesis via de novo pathway; (S)-dihydroorotate from bicarbonate: step 2/3. Catalyzes the condensation of carbamoyl phosphate and aspartate to form carbamoyl aspartate and inorganic phosphate, the committed step in the de novo pyrimidine nucleotide biosynthesis pathway. This Leptothrix cholodnii (strain ATCC 51168 / LMG 8142 / SP-6) (Leptothrix discophora (strain SP-6)) protein is Aspartate carbamoyltransferase catalytic subunit.